The chain runs to 562 residues: SLAIN motif-containing protein-like (562 aa).

Disordered regions lie at residues 292–313 (QDYASSSASVSRRSSSASLHSL), 344–381 (HRYSPSPLSSPRCQSPSAAESRATTSRIRPPRRSIQNH), and 409–562 (SLEA…DGCY). Low complexity-rich tracts occupy residues 295–311 (ASSSASVSRRSSSASLH) and 345–355 (RYSPSPLSSPR). Polar residues-rich tracts occupy residues 356–370 (CQSPSAAESRATTSR), 424–442 (QGPSSRLTRMQQPSTSTPP), 465–531 (VSTS…STVP), and 539–553 (SRRSLPSAKMNSTLG).

Belongs to the SLAIN motif-containing family.

In Xenopus laevis (African clawed frog), this protein is SLAIN motif-containing protein-like.